The primary structure comprises 289 residues: 33 kDa chaperonin (289 aa).

Disulfide bonds link Cys225-Cys227 and Cys258-Cys261.

It belongs to the HSP33 family. Post-translationally, under oxidizing conditions two disulfide bonds are formed involving the reactive cysteines. Under reducing conditions zinc is bound to the reactive cysteines and the protein is inactive.

It is found in the cytoplasm. In terms of biological role, redox regulated molecular chaperone. Protects both thermally unfolding and oxidatively damaged proteins from irreversible aggregation. Plays an important role in the bacterial defense system toward oxidative stress. The chain is 33 kDa chaperonin from Nitrosococcus oceani (strain ATCC 19707 / BCRC 17464 / JCM 30415 / NCIMB 11848 / C-107).